The sequence spans 187 residues: UPF0301 protein Ppha_2142 (187 aa).

It belongs to the UPF0301 (AlgH) family.

The chain is UPF0301 protein Ppha_2142 from Pelodictyon phaeoclathratiforme (strain DSM 5477 / BU-1).